A 471-amino-acid polypeptide reads, in one-letter code: PVSASIRLLDSSKGGATIGATPMESDSSVSALSGSSASKVSRRGRRRSHLASKSSAPTQAKLVALASNGVPEPVGVLEEAFSSLEDARAATSNAANDAAPPAAAPAVDHTVAPDVSTAAKIAATTATAATAAARAGQAAMMAELSATQRMVRNSFRSLGGVDTEELSCAISRYDELVMALMLRCGELETRLAMPPPPPPPSKANTTAANAPQMPQVAPIAAPRTTKVRETWSAVVKCDDPALSGKAIAEKVRTMVAPSLGVRVHEVRELPSRWWCDHSYSSVGELQKVMASKRFAELGLNVARNAAEKPKVIVYDVDTAIGPEEFMQELHENNFDSEMTLAQFKKSVHLVTKAWSATDGATVNVTLEVDDRAMAKLDVGRVYIKWFSFRCRSQVRTYACHRCVGFDHKVSECRQKESVCRQCGQQGHTAAKCQNPVDCRNCRHRGQPSGHYMLSNACPIYGALLARVQARH.

Residues 13–57 (KGGATIGATPMESDSSVSALSGSSASKVSRRGRRRSHLASKSSAP) are disordered. The span at 27-39 (SSVSALSGSSASK) shows a compositional bias: low complexity. Residues 40–50 (VSRRGRRRSHL) show a composition bias toward basic residues. CCHC-type zinc fingers lie at residues 397 to 414 (YACH…ECRQ) and 417 to 434 (SVCR…KCQN). Positions 438–457 (CRNCRHRGQPSGHYMLSNAC) are gag-like cysteine motif.

The protein to corresponding ORF of B.mori (R1BM).

This is an uncharacterized protein from Drosophila melanogaster (Fruit fly).